We begin with the raw amino-acid sequence, 131 residues long: DNA-directed RNA polymerases I, II, and III subunit RPABC2 (131 aa).

Positions 1 to 24 are disordered; that stretch reads MDDADYDNDDVGGDDFDDVDEDVD.

Belongs to the archaeal Rpo6/eukaryotic RPB6 RNA polymerase subunit family. As to quaternary structure, component of the RNA polymerase I (Pol I), RNA polymerase II (Pol II) and RNA polymerase III (Pol III) complexes consisting of at least 13, 12 and 17 subunits, respectively.

The protein localises to the nucleus. In terms of biological role, DNA-dependent RNA polymerases catalyze the transcription of DNA into RNA using the four ribonucleoside triphosphates as substrates. Common component of RNA polymerases I, II and III which synthesize ribosomal RNA precursors, mRNA precursors and many functional non-coding RNAs, and small RNAs, such as 5S rRNA and tRNAs, respectively. Pol II is the central component of the basal RNA polymerase II transcription machinery. Pols are composed of mobile elements that move relative to each other. In Pol II, Polr2F/RPB6 is part of the clamp element and together with parts of Polr2A/RPB1 and RPB2 forms a pocket to which the Polr2D/RPB4-Polr2G/RPB7 subcomplex binds. The polypeptide is DNA-directed RNA polymerases I, II, and III subunit RPABC2 (Drosophila melanogaster (Fruit fly)).